The sequence spans 411 residues: Putative binding protein BRA0748/BS1330_II0741 (411 aa).

Positions 1-25 (MLIRKWKAGLLAGLSILALASSADA) are cleaved as a signal peptide.

It belongs to the bacterial solute-binding protein 1 family. The complex is composed of two ATP-binding proteins (BRA0745), two transmembrane proteins (BRA0749) and a solute-binding protein (BRA0748).

It localises to the periplasm. In terms of biological role, probably part of an ABC transporter complex. The protein is Putative binding protein BRA0748/BS1330_II0741 of Brucella suis biovar 1 (strain 1330).